The following is a 257-amino-acid chain: Homeobox protein goosecoid (257 aa).

The segment at residues 160–219 (KRRHRTIFTDEQLEALENLFQETKYPDVGTREQLARKVHLREEKVEVWFKNRRAKWRRQK) is a DNA-binding region (homeobox). Positions 213 to 257 (AKWRRQKRSSSEESENAEKWNKTSSSKASPEKREEEGKSDLDSDS) are disordered. Residues 241 to 257 (SPEKREEEGKSDLDSDS) are compositionally biased toward basic and acidic residues.

Belongs to the paired homeobox family. Bicoid subfamily.

It is found in the nucleus. Its function is as follows. Regulates chordin (CHRD). May play a role in spatial programing within discrete embryonic fields or lineage compartments during organogenesis. In concert with NKX3-2, plays a role in defining the structural components of the middle ear; required for the development of the entire tympanic ring. Probably involved in the regulatory networks that define neural crest cell fate specification and determine mesoderm cell lineages in mammals. In Pongo pygmaeus (Bornean orangutan), this protein is Homeobox protein goosecoid (GSC).